The primary structure comprises 890 residues: Translation initiation factor IF-2 (890 aa).

Residues 50–304 (LRQGSPEQEE…LQQEFERPTA (255 aa)) form a disordered region. 3 stretches are compositionally biased toward basic and acidic residues: residues 112-125 (KRSDIEAEEKRKQE), 136-147 (RALEQEEAKREE), and 217-262 (ALKE…QEAK). Residues 390-559 (GRAPVVTVMG…VLQAELQELK (170 aa)) form the tr-type G domain. Residues 399–406 (GHVDHGKT) form a G1 region. 399 to 406 (GHVDHGKT) is a binding site for GTP. The G2 stretch occupies residues 424–428 (GITQH). Residues 445 to 448 (DTPG) form a G3 region. GTP contacts are provided by residues 445-449 (DTPGH) and 499-502 (NKMD). The G4 stretch occupies residues 499–502 (NKMD). Residues 535–537 (SAM) are G5.

Belongs to the TRAFAC class translation factor GTPase superfamily. Classic translation factor GTPase family. IF-2 subfamily.

The protein resides in the cytoplasm. In terms of biological role, one of the essential components for the initiation of protein synthesis. Protects formylmethionyl-tRNA from spontaneous hydrolysis and promotes its binding to the 30S ribosomal subunits. Also involved in the hydrolysis of GTP during the formation of the 70S ribosomal complex. In Halorhodospira halophila (strain DSM 244 / SL1) (Ectothiorhodospira halophila (strain DSM 244 / SL1)), this protein is Translation initiation factor IF-2.